The chain runs to 326 residues: MSGFGTQIDVKALGKVAVLLGGRSAEREVSLMSGTGVLKALLSHGVDAHAFDPAERDLGELKKEGFDRCFIALHGRYGEDGTVQGALELLGIPYTGPGVMASSIAMDKIMTKRIWRFEGLPTPDWRLVASAGETRAALQALGAPMIVKPSREGSTIGLTKVWTAEECDQAYVLASRYDPEVLCEEFIEGDETTCPVLGTGEGAHALPVIRIVAPEGNYDYQNKYFTDDTKYHCPSGLPAEEEAEIRRIVVRAFRTLGCRGWSRADIMIRASDRKPFLLEINTSPGMTGHSLVPMSARAIGVSYENLCLGILASAALDAAQPEQEHA.

The ATP-grasp domain maps to Lys-112 to Ala-312. An ATP-binding site is contributed by Leu-138–Thr-193. 3 residues coordinate Mg(2+): Asp-265, Glu-279, and Asn-281.

It belongs to the D-alanine--D-alanine ligase family. Requires Mg(2+) as cofactor. Mn(2+) is required as a cofactor.

It is found in the cytoplasm. It carries out the reaction 2 D-alanine + ATP = D-alanyl-D-alanine + ADP + phosphate + H(+). It functions in the pathway cell wall biogenesis; peptidoglycan biosynthesis. Cell wall formation. This is D-alanine--D-alanine ligase from Delftia acidovorans (strain DSM 14801 / SPH-1).